The sequence spans 597 residues: Elongation factor 4 (597 aa).

A tr-type G domain is found at 2-184 (KHIRNFSIIA…EIVARIPAPV (183 aa)). Residues 14 to 19 (DHGKST) and 131 to 134 (NKID) contribute to the GTP site.

Belongs to the TRAFAC class translation factor GTPase superfamily. Classic translation factor GTPase family. LepA subfamily.

The protein localises to the cell inner membrane. The enzyme catalyses GTP + H2O = GDP + phosphate + H(+). In terms of biological role, required for accurate and efficient protein synthesis under certain stress conditions. May act as a fidelity factor of the translation reaction, by catalyzing a one-codon backward translocation of tRNAs on improperly translocated ribosomes. Back-translocation proceeds from a post-translocation (POST) complex to a pre-translocation (PRE) complex, thus giving elongation factor G a second chance to translocate the tRNAs correctly. Binds to ribosomes in a GTP-dependent manner. This chain is Elongation factor 4, found in Aeromonas salmonicida (strain A449).